An 886-amino-acid chain; its full sequence is KH domain-containing protein hrpk-2 (886 aa).

The span at Asp-359–Ser-368 shows a compositional bias: basic and acidic residues. The interval Asp-359 to Asp-433 is disordered. Basic residues-rich tracts occupy residues Gly-369–Tyr-388 and His-415–His-425. KH domains lie at Lys-698 to Ile-761 and Pro-775 to Thr-839.

This Caenorhabditis elegans protein is KH domain-containing protein hrpk-2.